A 515-amino-acid polypeptide reads, in one-letter code: Tyrosine decarboxylase 1 (515 aa).

2 consecutive repeat copies span residues 81-138 and 141-192. Residues 81 to 192 are 2 X approximate tandem repeats; the sequence is DDITNHIVPG…KVLNKIGKDQ (112 aa). Residue A105 participates in substrate binding. 2 residues coordinate pyridoxal 5'-phosphate: T169 and C170. Residue H205 participates in substrate binding. The pyridoxal 5'-phosphate site is built by T264 and N318. K321 bears the N6-(pyridoxal phosphate)lysine mark.

The protein belongs to the group II decarboxylase family. It depends on pyridoxal 5'-phosphate as a cofactor. As to expression, mostly expressed in bulbs, and, to a lower extent, in stems, roots, leaves and flowers.

It carries out the reaction L-tyrosine + H(+) = tyramine + CO2. The protein operates within alkaloid biosynthesis. Its function is as follows. Catalyzes the decarboxylation of L-tyrosine to tyramine, which is converted to norbelladine, a precursor to all Amaryllidaceae alkaloids such as galanthamine, lycorine and haemanthamine, and including haemanthamine- and crinamine-type alkaloids, promising anticancer agents. The chain is Tyrosine decarboxylase 1 from Narcissus pseudonarcissus (Daffodil).